We begin with the raw amino-acid sequence, 240 residues long: 7-cyano-7-deazaguanine synthase (240 aa).

Residue 9–19 coordinates ATP; it reads FSGGLDSTACL. Positions 195, 210, 213, and 216 each coordinate Zn(2+).

Belongs to the QueC family. It depends on Zn(2+) as a cofactor.

It carries out the reaction 7-carboxy-7-deazaguanine + NH4(+) + ATP = 7-cyano-7-deazaguanine + ADP + phosphate + H2O + H(+). It functions in the pathway purine metabolism; 7-cyano-7-deazaguanine biosynthesis. In terms of biological role, catalyzes the ATP-dependent conversion of 7-carboxy-7-deazaguanine (CDG) to 7-cyano-7-deazaguanine (preQ(0)). This is 7-cyano-7-deazaguanine synthase from Pyrococcus furiosus (strain ATCC 43587 / DSM 3638 / JCM 8422 / Vc1).